A 365-amino-acid chain; its full sequence is Serine/threonine-protein phosphatase 2A activator 1 (365 aa).

The interval 321 to 349 is disordered; that stretch reads YEAPSETSEKPAAGTAHTTTTTMPPPRMT. Residues 331–342 show a composition bias toward low complexity; sequence PAAGTAHTTTTT.

Belongs to the PTPA-type PPIase family.

It is found in the cytoplasm. Its subcellular location is the nucleus. The catalysed reaction is [protein]-peptidylproline (omega=180) = [protein]-peptidylproline (omega=0). Functionally, PPIases accelerate the folding of proteins. It catalyzes the cis-trans isomerization of proline imidic peptide bonds in oligopeptides. Acts as a regulatory subunit for PP2A-like phosphatases modulating their activity or substrate specificity, probably by inducing a conformational change in the catalytic subunit, a direct target of the PPIase. Can reactivate inactive phosphatase PP2A-phosphatase methylesterase complexes (PP2Ai) in presence of ATP and Mg(2+) by dissociating the inactive form from the complex. This chain is Serine/threonine-protein phosphatase 2A activator 1 (RRD1), found in Eremothecium gossypii (strain ATCC 10895 / CBS 109.51 / FGSC 9923 / NRRL Y-1056) (Yeast).